Here is a 145-residue protein sequence, read N- to C-terminus: Probable flagellum biosynthesis repressor protein FlbT (145 aa).

This sequence belongs to the FlbT family.

In terms of biological role, has a post-transcriptional repressor function in flagellum biogenesis. Associates with the 5'-UTR of fljK mRNA and promotes its degradation. This chain is Probable flagellum biosynthesis repressor protein FlbT, found in Chelativorans sp. (strain BNC1).